Here is a 268-residue protein sequence, read N- to C-terminus: MQREEKQLEASLDALLNQVADLKNSLGSFIYKLENEYDRLTWPSVLDSFALLSGQLNTLNKVLKHEKTPLFRNQVIIPLVLSPDRDEDLMRQTEGRVPVFSHEVVPDHLRTKPDPEVEEQEKQLTTDAARIGADAAQKQIQSLNKMCSNLLEKISKEERESESGGLRPNKQTFNPGDTNALVAAVAFGKGLSNWRPSGSSGPGQPGQPGAGTILAGASGLPQVQMPGAPNQQQPMLSGVQMAQAGQPGKMPSGIKTNIKSASMHPYQR.

Positions 1-29 form a coiled coil; the sequence is MQREEKQLEASLDALLNQVADLKNSLGSF. Residue Ser-82 is modified to Phosphoserine. Residues 133–163 are a coiled coil; the sequence is ADAAQKQIQSLNKMCSNLLEKISKEERESES. Residues 142-151 form an interaction with the Elongin BC complex region; the sequence is SLNKMCSNLL. Disordered stretches follow at residues 156–176 and 193–268; these read KEERESESGGLRPNKQTFNPG and NWRP…PYQR. Residues 200-209 show a composition bias toward gly residues; the sequence is SGPGQPGQPG.

This sequence belongs to the Mediator complex subunit 8 family. As to quaternary structure, component of the Mediator complex, which is composed of MED1, MED4, MED6, MED7, MED8, MED9, MED10, MED11, MED12, MED13, MED13L, MED14, MED15, MED16, MED17, MED18, MED19, MED20, MED21, MED22, MED23, MED24, MED25, MED26, MED27, MED29, MED30, MED31, CCNC, CDK8 and CDC2L6/CDK11. The MED12, MED13, CCNC and CDK8 subunits form a distinct module termed the CDK8 module. Mediator containing the CDK8 module is less active than Mediator lacking this module in supporting transcriptional activation. Individual preparations of the Mediator complex lacking one or more distinct subunits have been variously termed ARC, CRSP, DRIP, PC2, SMCC and TRAP. May be part of a multisubunit E3 ubiquitin-protein ligase complex with the Elongin BC complex (ELOB and ELOC), CUL2 and RBX1.

Its subcellular location is the nucleus. The protein operates within protein modification; protein ubiquitination. Component of the Mediator complex, a coactivator involved in the regulated transcription of nearly all RNA polymerase II-dependent genes. Mediator functions as a bridge to convey information from gene-specific regulatory proteins to the basal RNA polymerase II transcription machinery. Mediator is recruited to promoters by direct interactions with regulatory proteins and serves as a scaffold for the assembly of a functional preinitiation complex with RNA polymerase II and the general transcription factors. May play a role as a target recruitment subunit in E3 ubiquitin-protein ligase complexes and thus in ubiquitination and subsequent proteasomal degradation of target proteins. The polypeptide is Mediator of RNA polymerase II transcription subunit 8 (Med8) (Mus musculus (Mouse)).